The following is a 784-amino-acid chain: LPS-assembly protein LptD (784 aa).

The first 24 residues, 1 to 24 (MKKRIPTLLATMIATALYSQQGLA), serve as a signal peptide directing secretion. 2 disulfide bridges follow: Cys31/Cys724 and Cys173/Cys725.

It belongs to the LptD family. Component of the lipopolysaccharide transport and assembly complex. Interacts with LptE and LptA. In terms of processing, contains two intramolecular disulfide bonds.

It localises to the cell outer membrane. Functionally, together with LptE, is involved in the assembly of lipopolysaccharide (LPS) at the surface of the outer membrane. This is LPS-assembly protein LptD from Shigella flexneri serotype 5b (strain 8401).